Reading from the N-terminus, the 304-residue chain is GDP-6-deoxy-D-mannose reductase (304 aa).

Residues 13–14 (FV) and 39–40 (DL) contribute to the NADP(+) site. 105-106 (SG) provides a ligand contact to substrate. Residue Tyr131 coordinates NADP(+). Residues Asn160, Arg200, and 260-263 (RRAE) each bind substrate.

It belongs to the NAD(P)-dependent epimerase/dehydratase family. GDP-6-deoxy-D-mannose reductase subfamily.

The enzyme catalyses GDP-alpha-D-rhamnose + NAD(+) = GDP-4-dehydro-alpha-D-rhamnose + NADH + H(+). It carries out the reaction GDP-alpha-D-rhamnose + NADP(+) = GDP-4-dehydro-alpha-D-rhamnose + NADPH + H(+). Its function is as follows. Reductase that catalyzes the conversion of GDP-6-deoxy-D-mannose to GDP-4-dehydro-6-deoxy-D-mannose (GDP-D-rhamnose). The protein is GDP-6-deoxy-D-mannose reductase (rmd) of Pseudomonas aeruginosa (strain ATCC 15692 / DSM 22644 / CIP 104116 / JCM 14847 / LMG 12228 / 1C / PRS 101 / PAO1).